Consider the following 243-residue polypeptide: NAD-dependent protein deacetylase (243 aa).

Residues 1–243 (MKHDLETLKH…VSVVKSLMTE (243 aa)) enclose the Deacetylase sirtuin-type domain. NAD(+) is bound by residues Ala24, Phe35, Arg36, Gln105, Ile107, Asp108, and His123. Phe35 serves as a coordination point for nicotinamide. Nicotinamide is bound by residues Ile107 and Asp108. The Proton acceptor role is filled by His123. Positions 131, 134, 151, and 154 each coordinate Zn(2+). NAD(+)-binding residues include Ser192, Ser193, Asn215, and Asp232.

It belongs to the sirtuin family. Class U subfamily. The cofactor is Zn(2+).

It is found in the cytoplasm. It catalyses the reaction N(6)-acetyl-L-lysyl-[protein] + NAD(+) + H2O = 2''-O-acetyl-ADP-D-ribose + nicotinamide + L-lysyl-[protein]. In terms of biological role, NAD-dependent protein deacetylase which modulates the activities of several enzymes which are inactive in their acetylated form. The protein is NAD-dependent protein deacetylase of Staphylococcus aureus (strain MRSA252).